The chain runs to 169 residues: Peptide methionine sulfoxide reductase MsrA (169 aa).

Cys13 is an active-site residue.

This sequence belongs to the MsrA Met sulfoxide reductase family.

The catalysed reaction is L-methionyl-[protein] + [thioredoxin]-disulfide + H2O = L-methionyl-(S)-S-oxide-[protein] + [thioredoxin]-dithiol. It carries out the reaction [thioredoxin]-disulfide + L-methionine + H2O = L-methionine (S)-S-oxide + [thioredoxin]-dithiol. Its function is as follows. Has an important function as a repair enzyme for proteins that have been inactivated by oxidation. Catalyzes the reversible oxidation-reduction of methionine sulfoxide in proteins to methionine. This is Peptide methionine sulfoxide reductase MsrA from Mycolicibacterium vanbaalenii (strain DSM 7251 / JCM 13017 / BCRC 16820 / KCTC 9966 / NRRL B-24157 / PYR-1) (Mycobacterium vanbaalenii).